We begin with the raw amino-acid sequence, 138 residues long: uncharacterized protein (138 aa).

The protein resides in the plastid. It is found in the chloroplast. This is an uncharacterized protein from Chlorella vulgaris (Green alga).